Reading from the N-terminus, the 669-residue chain is Elongation factor G-like protein (669 aa).

The 273-residue stretch at 7–279 folds into the tr-type G domain; it reads ESLRNVAIVG…VLIKEAPDPS (273 aa). A G1 region spans residues 16–23; the sequence is GPYGSGKT. A GTP-binding site is contributed by 16 to 23; that stretch reads GPYGSGKT. The G2 stretch occupies residues 59–63; the sequence is QMSVE. The G3 stretch occupies residues 80-83; it reads DCPG. GTP is bound by residues 80-84 and 134-137; these read DCPGS and NKMD. The G4 stretch occupies residues 134-137; the sequence is NKMD. A G5 region spans residues 257–259; it reads AAE.

Belongs to the TRAFAC class translation factor GTPase superfamily. Classic translation factor GTPase family. EF-G/EF-2 subfamily.

The polypeptide is Elongation factor G-like protein (Synechocystis sp. (strain ATCC 27184 / PCC 6803 / Kazusa)).